The following is a 741-amino-acid chain: Endoplasmic reticulum membrane sensor NFE2L1 (741 aa).

A helical; Signal-anchor for type II membrane protein membrane pass occupies residues 7–24 (YLTEGLLQFTILLSLIGV). Disordered regions lie at residues 108–148 (DPEG…TEQG) and 198–220 (QKEQ…WSGE). The segment covering 113-131 (VSGSQPNSGLALESSSGLQ) has biased composition (polar residues). The segment at 191–199 (VFDYSHRQK) is cholesterol recognition/amino acid consensus (CRAC) region. A compositionally biased stretch (basic and acidic residues) spans 198–216 (QKEQDVDKELQDGREREDT). Asparagine 319 and asparagine 331 each carry an N-linked (GlcNAc...) asparagine glycan. The segment at 350 to 354 (SPEVE) is CPD. N-linked (GlcNAc...) asparagine glycosylation is present at asparagine 394. Disordered regions lie at residues 441–501 (EEEF…DSET) and 551–582 (SALD…QMSR). The Destruction motif motif lies at 447-451 (DSGLS). Positions 447 to 492 (DSGLSLDSSHSPSSLSSSEGSSSSSSSSSSSSASSSASSSFSEEGA) are enriched in low complexity. Serine 497 bears the Phosphoserine; by CK2 mark. Residues 567 to 582 (GSKEKQADFLDKQMSR) are compositionally biased toward basic and acidic residues. Position 568 is a phosphoserine (serine 568). In terms of domain architecture, bZIP spans 623–686 (LIRDIRRRGK…RQMKQKVQSL (64 aa)). The tract at residues 625-644 (RDIRRRGKNKMAAQNCRKRK) is basic motif. The tract at residues 651–665 (LERDVEDLQRDKARL) is leucine-zipper. Positions 722 to 741 (RTMADQQARRQERKPKDRRK) are disordered. The Nuclear localization signal motif lies at 730–737 (RRQERKPK). Over residues 732–741 (QERKPKDRRK) the composition is skewed to basic residues.

It belongs to the bZIP family. CNC subfamily. Interacts with KEAP1. As to quaternary structure, interacts (via CPD region) with FBXW7; leading to its ubiquitination and degradation. Interacts with SYVN1/HRD1; leading to its ubiquitination and degradation. Interacts (when ubiquitinated) with DDI2; leading to its cleavage. In terms of assembly, interacts (via the bZIP domain) with small MAF protein (MAFF, MAFG or MAFK); required for binding to antioxidant response elements (AREs) on DNA. Interacts (via Destruction motif) with BTRC; leading to its ubiquitination and degradation. Interacts with CEBPB; the heterodimer represses expression of DSPP during odontoblast differentiation. Interacts with MOTS-c, a peptide produced by the mitochondrially encoded 12S rRNA MT-RNR1. In terms of processing, cleaved at Leu-104 by the aspartyl protease DDI2 following retrotranslocation, releasing the protein from the endoplasmic reticulum membrane and forming the transcription factor NRF1 that translocates into the nucleus. Ubiquitination is prerequisite for cleavage by aspartyl protease DDI2. N-glycosylated in normal conditions, when it has a single-pass type II membrane protein topology, with the DNA-binding domain facing the endoplasmic reticulum lumen. Deglycosylated during retrotranslocation to the cytosolic side of the membrane, to have a single-pass type III membrane protein topology with the major part of the protein facing the cytosol. Post-translationally, ubiquitinated by the SCF(FBXW7) complex and SYVN1/HRD1, leading to its degradation by the proteasome. Ubiquitinated during retrotranslocation to the cytosolic side of the membrane: ubiquitination does not lead to degradation and is required for processing by the aspartyl protease DDI2 and subsequent release from the endoplasmic reticulum membrane. In terms of processing, phosphorylation by CK2 at Ser-497 inhibits transcription factor activity, possibly by affecting DNA-binding activity. Phosphorylation at Ser-568 is required for interaction with CEBPB. Ubiquitinated by the SCF(BTRC) complex in the nucleus, leading to its degradation by the proteasome. Isoform 1: Widely expressed including kidney, brown fat, white fat, large intestine, small intestine, stomach, lung, brain and liver. Isoform 1: Expressed in mouse embryonic fibroblasts (MEF). Isoform 2: Widely expressed including kidney, brown fat, white fat, large intestine, small intestine, stomach, lung, brain and liver. Isoform 2: levels in white fat, lung and liver are increased compared to isoform 1 (at protein level). Isoform 2: levels are elevated in brown fat and brain, but are reduced in liver compared to isoform 1 levels. Isoform 2: Expressed in mouse embryonic fibroblasts (MEF).

The protein localises to the endoplasmic reticulum membrane. Its subcellular location is the nucleus. It is found in the cytoplasm. Functionally, endoplasmic reticulum membrane sensor that translocates into the nucleus in response to various stresses to act as a transcription factor. Constitutes a precursor of the transcription factor NRF1. Able to detect various cellular stresses, such as cholesterol excess, oxidative stress or proteasome inhibition. In response to stress, it is released from the endoplasmic reticulum membrane following cleavage by the protease DDI2 and translocates into the nucleus to form the transcription factor NRF1. Acts as a key sensor of cholesterol excess: in excess cholesterol conditions, the endoplasmic reticulum membrane form of the protein directly binds cholesterol via its CRAC motif, preventing cleavage and release of the transcription factor NRF1, thereby allowing expression of genes promoting cholesterol removal, such as CD36. Involved in proteasome homeostasis: in response to proteasome inhibition, it is released from the endoplasmic reticulum membrane, translocates to the nucleus and activates expression of genes encoding proteasome subunits. Its function is as follows. CNC-type bZIP family transcription factor that translocates to the nucleus and regulates expression of target genes in response to various stresses. Heterodimerizes with small-Maf proteins (MAFF, MAFG or MAFK) and binds DNA motifs including the antioxidant response elements (AREs), which regulate expression of genes involved in oxidative stress response. Activates or represses expression of target genes, depending on the context. Plays a key role in cholesterol homeostasis by acting as a sensor of cholesterol excess: in low cholesterol conditions, translocates into the nucleus and represses expression of genes involved in defense against cholesterol excess, such as CD36. In excess cholesterol conditions, the endoplasmic reticulum membrane form of the protein directly binds cholesterol via its CRAC motif, preventing cleavage and release of the transcription factor NRF1, thereby allowing expression of genes promoting cholesterol removal. Critical for redox balance in response to oxidative stress: acts by binding the AREs motifs on promoters and mediating activation of oxidative stress response genes, such as GCLC, GCLM, GSS, MT1 and MT2. Plays an essential role during fetal liver hematopoiesis: probably has a protective function against oxidative stress and is involved in lipid homeostasis in the liver. Involved in proteasome homeostasis: in response to proteasome inhibition, mediates the 'bounce-back' of proteasome subunits by translocating into the nucleus and activating expression of genes encoding proteasome subunits. Also involved in regulating glucose flux. Together with CEBPB; represses expression of DSPP during odontoblast differentiation. In response to ascorbic acid induction, activates expression of SP7/Osterix in osteoblasts. In terms of biological role, transcription factor that binds the antioxidant response elements (ARE) consensus sequence on promoters and activates their expression. Transcription factor that binds the extended kappa 3 site of the TNF-alpha promoter after Fc gamma RIII stimulation and participates in the induction of this cytokine. The chain is Endoplasmic reticulum membrane sensor NFE2L1 from Mus musculus (Mouse).